The chain runs to 94 residues: ESAT-6-like protein EsxN (94 aa).

Belongs to the WXG100 family. ESAT-6 subfamily.

It is found in the secreted. The sequence is that of ESAT-6-like protein EsxN from Mycobacterium bovis (strain ATCC BAA-935 / AF2122/97).